A 462-amino-acid chain; its full sequence is Putative ABC transporter A445L (462 aa).

The protein belongs to the protein kinase superfamily. ADCK protein kinase family.

In Chlorella (PBCV-1), this protein is Putative ABC transporter A445L.